Consider the following 554-residue polypeptide: Glucose-6-phosphate isomerase (554 aa).

Catalysis depends on glutamate 359, which acts as the Proton donor. Residues histidine 390 and lysine 518 contribute to the active site.

This sequence belongs to the GPI family.

It is found in the cytoplasm. It catalyses the reaction alpha-D-glucose 6-phosphate = beta-D-fructose 6-phosphate. The protein operates within carbohydrate biosynthesis; gluconeogenesis. Its pathway is carbohydrate degradation; glycolysis; D-glyceraldehyde 3-phosphate and glycerone phosphate from D-glucose: step 2/4. Functionally, catalyzes the reversible isomerization of glucose-6-phosphate to fructose-6-phosphate. The polypeptide is Glucose-6-phosphate isomerase (Pseudomonas syringae pv. tomato (strain ATCC BAA-871 / DC3000)).